We begin with the raw amino-acid sequence, 575 residues long: MQCRSIVHRLYSKVSHVTTPIFYPNAKPHLGHLYSSLLSDVYHRWQLFKGNLSFFTTGTDEHGLKIQCASESNGFDQPKKFVDKLYPEFVQLDKIYGINYTRFIRTTDPDHIENVMKLWELCLKNGYIYMGEHKGWYSISDETFYPESKVIKDPKNDGKYLNTESKNEVVYQSETNYFFRLSLFNKKIVDHIRKNPDFIFPASKRDQILKELETGGTLPDLSISRPSARLKWGIPTPNDPSQKVYVWFDALCNYLSSIGGIPSILSNATEVVSRHYSDKSNVKGQLLIPYPKEVQRNTIHVIGKDIAKFHTVYWPSFLLAAGLPLPRQIVVHGHWLCNGMKMSKSLGNVVDPIDMARYYGADIVRWFLLENSKLEEDGDFQEAKLYETRELLVSKWGNLINRCCGSKFNIERAVMKFSDKANFQFQEIFQNEPIVSERIENLAKLLNKSQEVFDEKIAIFQYPQLLRHVWSIINDANTLVQNSKPWERELDQQDNIIFLAMETSRILSILCQSIIPSLSQSFLDRIDVSKEKRTINYARLGSDKTYGKQSNKKGREVPLKKIPFRLQEEQTNMRS.

The short motif at 20–32 (PIFYPNAKPHLGH) is the 'HIGH' region element. The short motif at 341-345 (KMSKS) is the 'KMSKS' region element. K344 serves as a coordination point for ATP.

It belongs to the class-I aminoacyl-tRNA synthetase family.

It localises to the mitochondrion matrix. It carries out the reaction tRNA(Met) + L-methionine + ATP = L-methionyl-tRNA(Met) + AMP + diphosphate. Functionally, catalyzes the attachment of methionine to tRNA(Met) in the mitochondrion. The polypeptide is Methionine--tRNA ligase, mitochondrial (MSM1) (Saccharomyces cerevisiae (strain ATCC 204508 / S288c) (Baker's yeast)).